The primary structure comprises 266 residues: 3-methyl-2-oxobutanoate hydroxymethyltransferase (266 aa).

The Mg(2+) site is built by Asp-45 and Asp-84. 3-methyl-2-oxobutanoate contacts are provided by residues 45–46, Asp-84, and Lys-113; that span reads DS. Residue Glu-115 coordinates Mg(2+). Glu-183 acts as the Proton acceptor in catalysis.

This sequence belongs to the PanB family. Homodecamer; pentamer of dimers. The cofactor is Mg(2+).

It is found in the cytoplasm. The catalysed reaction is 3-methyl-2-oxobutanoate + (6R)-5,10-methylene-5,6,7,8-tetrahydrofolate + H2O = 2-dehydropantoate + (6S)-5,6,7,8-tetrahydrofolate. It functions in the pathway cofactor biosynthesis; (R)-pantothenate biosynthesis; (R)-pantoate from 3-methyl-2-oxobutanoate: step 1/2. Catalyzes the reversible reaction in which hydroxymethyl group from 5,10-methylenetetrahydrofolate is transferred onto alpha-ketoisovalerate to form ketopantoate. This Coxiella burnetii (strain CbuG_Q212) (Coxiella burnetii (strain Q212)) protein is 3-methyl-2-oxobutanoate hydroxymethyltransferase.